The chain runs to 240 residues: MLLQGALLLLLALPSHGEDNMEDPPLPKGACAGWMAGIPGHPGHNGTPGRDGRDGTPGEKGEKGDPGLVGPKGDTGETGITGIEGPRGFPGTPGRKGEPGESAYVYRSAFSVGLERQVTVPNVPIRFTKIFYNQQNHYDGTTGKFLCNIPGLYYFSYHITVYLKDVKVSLYKNDKALLFTHDQFQDKNVDQASGSVLLYLEKGDQVWLQVYEGENHNGVYADNVNDSTFTGFLLYHNIVE.

Residues 1 to 17 (MLLQGALLLLLALPSHG) form the signal peptide. Lysine 28 is subject to 5-hydroxylysine. A glycan (O-linked (Gal...) hydroxylysine) is linked at lysine 28. The tract at residues 29–100 (GACAGWMAGI…GTPGRKGEPG (72 aa)) is disordered. Cysteine 31 bears the S-(2-succinyl)cysteine mark. 4-hydroxyproline occurs at positions 39, 42, and 48. One can recognise a Collagen-like domain in the interval 43 to 102 (GHNGTPGRDGRDGTPGEKGEKGDPGLVGPKGDTGETGITGIEGPRGFPGTPGRKGEPGES). Over residues 50–65 (RDGRDGTPGEKGEKGD) the composition is skewed to basic and acidic residues. Residues lysine 60, lysine 63, and lysine 72 each carry the 5-hydroxylysine modification. 3 O-linked (Gal...) hydroxylysine glycosylation sites follow: lysine 60, lysine 63, and lysine 72. Proline 86 is modified (4-hydroxyproline). Residue lysine 96 is modified to 5-hydroxylysine. Lysine 96 carries O-linked (Gal...) hydroxylysine glycosylation. Positions 103–240 (AYVYRSAFSV…GFLLYHNIVE (138 aa)) constitute a C1q domain.

In terms of assembly, homomultimer. Forms trimers, hexamers and 12- to 18-mers. The trimers (low molecular weight complexes / LMW) are assembled via non-covalent interactions of the collagen-like domains in a triple helix and hydrophobic interactions within the globular C1q domain. Several trimers can associate to form disulfide-linked hexamers (middle molecular weight complexes / MMW) and larger complexes (higher molecular weight / HMW). The HMW-complex assembly is also modulated by the degree of lysine hydroxylation and glycosylation. LMW, MMW and HMW complexes bind to HBEGF, MMW and HMW complexes bind to PDGFB, and HMW complex binds to FGF2. Interacts with CTRP9 via the C1q domain (heterotrimeric complex). HMW complexes are more extensively glycosylated than smaller oligomers. Hydroxylation and glycosylation of the lysine residues within the collagen-like domain of adiponectin seem to be critically involved in regulating the formation and/or secretion of HMW complexes and consequently contribute to the insulin-sensitizing activity of adiponectin in hepatocytes. In terms of processing, O-glycosylated. O-linked glycans on hydroxylysine residues consist of Glc-Gal disaccharides bound to the oxygen atom of post-translationally added hydroxyl groups. O-linked glycosylations elsewhere disialylated with the structure Neu5Acalpha2-&gt;8Neu5Acalpha2-&gt;3Gal. Sialylated by alpha 2,8-sialyltransferase III. Desialylated forms are rapidly cleared from the circulation. Not N-glycosylated. Post-translationally, succination of Cys-31 by the Krebs cycle intermediate fumarate, which leads to S-(2-succinyl)cysteine residues, inhibits polymerization and secretion of adiponectin. Adiponectin is a major target for succination in both adipocytes and adipose tissue of diabetic mammals. It was proposed that succination of proteins is a biomarker of mitochondrial stress and accumulation of Krebs cycle intermediates in adipose tissue in diabetes and that succination of adiponectin may contribute to the decrease in plasma adiponectin in diabetes.

It localises to the secreted. With respect to regulation, polymerization and secretion of adiponectin is inhibited by succination of cysteine residues by the Krebs cycle intermediate fumarate, which leads to S-(2-succinyl)cysteine residues. In terms of biological role, important adipokine involved in the control of fat metabolism and insulin sensitivity, with direct anti-diabetic, anti-atherogenic and anti-inflammatory activities. Stimulates AMPK phosphorylation and activation in the liver and the skeletal muscle, enhancing glucose utilization and fatty-acid combustion. Antagonizes TNF-alpha by negatively regulating its expression in various tissues such as liver and macrophages, and also by counteracting its effects. Inhibits endothelial NF-kappa-B signaling through a cAMP-dependent pathway. May play a role in cell growth, angiogenesis and tissue remodeling by binding and sequestering various growth factors with distinct binding affinities, depending on the type of complex, LMW, MMW or HMW. The protein is Adiponectin (ADIPOQ) of Bos taurus (Bovine).